The sequence spans 49 residues: MLRKAGLACTICGSRNYTLNLSSVAKEKRVEVKKFCRTCGKHTLHKETR.

The protein belongs to the bacterial ribosomal protein bL33 family.

The protein is Large ribosomal subunit protein bL33B (rpmG2) of Lactococcus lactis subsp. lactis (strain IL1403) (Streptococcus lactis).